The sequence spans 774 residues: 5-methyltetrahydropteroyltriglutamate--homocysteine methyltransferase (774 aa).

5-methyltetrahydropteroyltri-L-glutamate is bound by residues 23–26 (RELK) and lysine 123. L-homocysteine-binding positions include 446 to 448 (IGS) and glutamate 499. L-methionine-binding positions include 446-448 (IGS) and glutamate 499. 5-methyltetrahydropteroyltri-L-glutamate-binding positions include 530 to 531 (RC) and tryptophan 576. L-homocysteine is bound at residue aspartate 614. L-methionine is bound at residue aspartate 614. Glutamate 620 serves as a coordination point for 5-methyltetrahydropteroyltri-L-glutamate. Residues histidine 656, cysteine 658, and glutamate 680 each coordinate Zn(2+). Histidine 709 acts as the Proton donor in catalysis. Cysteine 741 is a Zn(2+) binding site.

The protein belongs to the vitamin-B12 independent methionine synthase family. The cofactor is Zn(2+).

The catalysed reaction is 5-methyltetrahydropteroyltri-L-glutamate + L-homocysteine = tetrahydropteroyltri-L-glutamate + L-methionine. It functions in the pathway amino-acid biosynthesis; L-methionine biosynthesis via de novo pathway; L-methionine from L-homocysteine (MetE route): step 1/1. Its function is as follows. Catalyzes the transfer of a methyl group from 5-methyltetrahydrofolate to homocysteine resulting in methionine formation. The protein is 5-methyltetrahydropteroyltriglutamate--homocysteine methyltransferase of Aliivibrio fischeri (strain MJ11) (Vibrio fischeri).